Here is a 202-residue protein sequence, read N- to C-terminus: Adenylate kinase (202 aa).

An ATP-binding site is contributed by 12-20 (GVPGVGKTT).

Belongs to the archaeal adenylate kinase family.

The protein resides in the cytoplasm. It carries out the reaction AMP + ATP = 2 ADP. The chain is Adenylate kinase (adkA) from Aeropyrum pernix (strain ATCC 700893 / DSM 11879 / JCM 9820 / NBRC 100138 / K1).